A 137-amino-acid chain; its full sequence is ATP synthase epsilon chain, chloroplastic (137 aa).

The protein belongs to the ATPase epsilon chain family. As to quaternary structure, F-type ATPases have 2 components, CF(1) - the catalytic core - and CF(0) - the membrane proton channel. CF(1) has five subunits: alpha(3), beta(3), gamma(1), delta(1), epsilon(1). CF(0) has three main subunits: a, b and c.

The protein resides in the plastid. The protein localises to the chloroplast thylakoid membrane. Its function is as follows. Produces ATP from ADP in the presence of a proton gradient across the membrane. In Pisum sativum (Garden pea), this protein is ATP synthase epsilon chain, chloroplastic.